The primary structure comprises 101 residues: Large ribosomal subunit protein uL24c (101 aa).

It belongs to the universal ribosomal protein uL24 family. As to quaternary structure, part of the 50S ribosomal subunit.

The protein resides in the plastid. It localises to the chloroplast. Its function is as follows. One of two assembly initiator proteins, it binds directly to the 5'-end of the 23S rRNA, where it nucleates assembly of the 50S subunit. In Guillardia theta (Cryptophyte), this protein is Large ribosomal subunit protein uL24c (rpl24).